The following is a 556-amino-acid chain: 2-succinyl-5-enolpyruvyl-6-hydroxy-3-cyclohexene-1-carboxylate synthase (556 aa).

Belongs to the TPP enzyme family. MenD subfamily. Homodimer. Requires Mg(2+) as cofactor. It depends on Mn(2+) as a cofactor. Thiamine diphosphate serves as cofactor.

It carries out the reaction isochorismate + 2-oxoglutarate + H(+) = 5-enolpyruvoyl-6-hydroxy-2-succinyl-cyclohex-3-ene-1-carboxylate + CO2. The protein operates within quinol/quinone metabolism; 1,4-dihydroxy-2-naphthoate biosynthesis; 1,4-dihydroxy-2-naphthoate from chorismate: step 2/7. Its pathway is quinol/quinone metabolism; menaquinone biosynthesis. Catalyzes the thiamine diphosphate-dependent decarboxylation of 2-oxoglutarate and the subsequent addition of the resulting succinic semialdehyde-thiamine pyrophosphate anion to isochorismate to yield 2-succinyl-5-enolpyruvyl-6-hydroxy-3-cyclohexene-1-carboxylate (SEPHCHC). This chain is 2-succinyl-5-enolpyruvyl-6-hydroxy-3-cyclohexene-1-carboxylate synthase, found in Enterobacter sp. (strain 638).